The sequence spans 278 residues: Neuronal membrane glycoprotein M6-a (278 aa).

Position 1 is an N-acetylmethionine (M1). Residues 1–22 (MEENMEEGQTQKGCFECCIKCL) are Cytoplasmic-facing. A helical transmembrane segment spans residues 23 to 43 (GGIPYASLIATILLYAGVALF). Residues 44–84 (CGCGHEALSGTVNILQTYFEMARTAGDTLDVFTMIDIFKYV) are Extracellular-facing. A helical transmembrane segment spans residues 85–105 (IYGIAAAFFVYGILLMVEGFF). Over 106-127 (TTGAIKDLYGDFKITTCGRCVS) the chain is Cytoplasmic. A helical transmembrane segment spans residues 128–148 (AWFIMLTYLFMLAWLGVTAFT). Residues 149–213 (SLPVYMYFNL…STELNMTFHL (65 aa)) lie on the Extracellular side of the membrane. N-linked (GlcNAc...) asparagine glycosylation is present at N164. A disulfide bridge links C174 with C192. The N-linked (GlcNAc...) asparagine glycan is linked to N208. Residues 214-234 (FIVALAGAGAAVIAMVHYLMV) traverse the membrane as a helical segment. Residues 235–278 (LSANWAYVKDACRMQKYEDIKSKEEQELHDIHSTRSKERLNAYT) are Cytoplasmic-facing. The residue at position 256 (S256) is a Phosphoserine. T278 carries the phosphothreonine modification.

The protein belongs to the myelin proteolipid protein family. Interacts with OPRM1. Interacts with palmitoyltransferase ZDHHC17/HIP14; the interaction leads to palmitoylation of GPM6A. In terms of processing, N-glycosylated. Palmitoylated by ZDHHC17/HIP14.

The protein resides in the cell membrane. It localises to the cell projection. The protein localises to the axon. It is found in the growth cone. Its subcellular location is the dendritic spine. The protein resides in the filopodium. It localises to the neuron projection. In terms of biological role, involved in neuronal differentiation, including differentiation and migration of neuronal stem cells. Plays a role in neuronal plasticity and is involved in neurite and filopodia outgrowth, filopodia motility and probably synapse formation. GPM6A-induced filopodia formation involves mitogen-activated protein kinase (MAPK) and Src signaling pathways. May be involved in neuronal NGF-dependent Ca(2+) influx. May be involved in regulation of endocytosis and intracellular trafficking of G-protein-coupled receptors (GPCRs); may enhance internalization and recycling of mu-type opioid receptor. The chain is Neuronal membrane glycoprotein M6-a (GPM6A) from Bos taurus (Bovine).